Consider the following 1226-residue polypeptide: Methionine synthase (1226 aa).

Residues 6–326 (RAQIEAQLKQ…EHIRHMAMAV (321 aa)) enclose the Hcy-binding domain. Zn(2+) contacts are provided by Cys248, Cys311, and Cys312. One can recognise a Pterin-binding domain in the interval 357 to 618 (FVNVGERTNV…VPEKLREAVE (262 aa)). A B12-binding N-terminal domain is found at 651 to 745 (SALEWRTWSV…FINASKQVGS (95 aa)). Methylcob(III)alamin is bound by residues Glu695, 757–761 (GDVHD), His760, Ser805, Thr809, and Ala861. One can recognise a B12-binding domain in the interval 747-882 (NGKILLATVK…SDELRPAFVE (136 aa)). The AdoMet activation domain maps to 898–1226 (KKPRTKPVTL…EKWLGPNING (329 aa)). S-adenosyl-L-methionine contacts are provided by residues Asp948, Arg1136, and 1191–1192 (YF).

The protein belongs to the vitamin-B12 dependent methionine synthase family. Requires methylcob(III)alamin as cofactor. Zn(2+) is required as a cofactor.

It catalyses the reaction (6S)-5-methyl-5,6,7,8-tetrahydrofolate + L-homocysteine = (6S)-5,6,7,8-tetrahydrofolate + L-methionine. It functions in the pathway amino-acid biosynthesis; L-methionine biosynthesis via de novo pathway; L-methionine from L-homocysteine (MetH route): step 1/1. In terms of biological role, catalyzes the transfer of a methyl group from methyl-cobalamin to homocysteine, yielding enzyme-bound cob(I)alamin and methionine. Subsequently, remethylates the cofactor using methyltetrahydrofolate. This Vibrio vulnificus (strain YJ016) protein is Methionine synthase (metH).